The following is a 1391-amino-acid chain: DNA-directed RNA polymerase subunit beta' (1391 aa).

Residues C72, C74, C87, and C90 each coordinate Zn(2+). The Mg(2+) site is built by D462, D464, and D466. C816, C890, C897, and C900 together coordinate Zn(2+).

The protein belongs to the RNA polymerase beta' chain family. The RNAP catalytic core consists of 2 alpha, 1 beta, 1 beta' and 1 omega subunit. When a sigma factor is associated with the core the holoenzyme is formed, which can initiate transcription. The cofactor is Mg(2+). Zn(2+) serves as cofactor.

It catalyses the reaction RNA(n) + a ribonucleoside 5'-triphosphate = RNA(n+1) + diphosphate. In terms of biological role, DNA-dependent RNA polymerase catalyzes the transcription of DNA into RNA using the four ribonucleoside triphosphates as substrates. This chain is DNA-directed RNA polymerase subunit beta', found in Neisseria gonorrhoeae (strain NCCP11945).